Reading from the N-terminus, the 66-residue chain is Toxin Os1 (66 aa).

The LCN-type CS-alpha/beta domain occupies 2–66 (RDGYIVQLHN…PIKWLDPKCY (65 aa)). Intrachain disulfides connect Cys-12–Cys-65, Cys-16–Cys-37, Cys-22–Cys-47, and Cys-26–Cys-49.

Belongs to the long (4 C-C) scorpion toxin superfamily. Sodium channel inhibitor family. Alpha subfamily. As to expression, expressed by the venom gland.

The protein localises to the secreted. Functionally, alpha toxins bind voltage-independently at site-3 of sodium channels (Nav) and inhibit the inactivation of the activated channels, thereby blocking neuronal transmission. This toxin possesses a high paralytic activity against mice. This chain is Toxin Os1, found in Orthochirus scrobiculosus (Central Asian scorpion).